The primary structure comprises 194 residues: Ion-translocating oxidoreductase complex subunit A (194 aa).

Helical transmembrane passes span 5–25, 47–67, 72–92, 102–122, 135–155, and 172–192; these read VLILISAVLVNNFVLVQFLGL, FVLTLSSVLAYLTWAYILVPF, LRTISFILVIAVAVQFTEMFV, VLGVFLPLITSNCAVLGVALL, LTYGFGAAIGFSLVLILFAAM, and SIGLITAGLMSLAFMGFSGLI.

Belongs to the NqrDE/RnfAE family. The complex is composed of six subunits: RnfA, RnfB, RnfC, RnfD, RnfE and RnfG.

Its subcellular location is the cell inner membrane. Its function is as follows. Part of a membrane-bound complex that couples electron transfer with translocation of ions across the membrane. The sequence is that of Ion-translocating oxidoreductase complex subunit A from Alcanivorax borkumensis (strain ATCC 700651 / DSM 11573 / NCIMB 13689 / SK2).